The chain runs to 533 residues: Probable dolichyl pyrophosphate Man9GlcNAc2 alpha-1,3-glucosyltransferase (533 aa).

The interval 1–20 (MPKKKPAKHSGEDDITIPVS) is disordered. 9 helical membrane passes run 42 to 64 (FLCISLFALLIRSAVTMYPYSGA), 149 to 169 (WTVLSSDAFIFFPAALFFVLV), 184 to 204 (WHIAMILLNPCLILIDHGHFQ), 214 to 234 (VGAIAAVLCESEVLTCVLFSL), 264 to 284 (ILSVIKLGIAVIVTFVIFWWP), 360 to 380 (GFLYGLLNSSMAFYLFSFQVH), 422 to 442 (LLIPYLTLSFLFTVIYHSPGN), 463 to 483 (VFLLRTHFFISVVLHVLYLTI), and 491 to 511 (FLFEALIMILCFSYFIMFAFY).

It belongs to the ALG6/ALG8 glucosyltransferase family.

Its subcellular location is the endoplasmic reticulum membrane. It carries out the reaction an alpha-D-Man-(1-&gt;2)-alpha-D-Man-(1-&gt;2)-alpha-D-Man-(1-&gt;3)-[alpha-D-Man-(1-&gt;2)-alpha-D-Man-(1-&gt;3)-[alpha-D-Man-(1-&gt;2)-alpha-D-Man-(1-&gt;6)]-alpha-D-Man-(1-&gt;6)]-beta-D-Man-(1-&gt;4)-beta-D-GlcNAc-(1-&gt;4)-alpha-D-GlcNAc-diphospho-di-trans,poly-cis-dolichol + a di-trans,poly-cis-dolichyl beta-D-glucosyl phosphate = an alpha-D-Glc-(1-&gt;3)-alpha-D-Man-(1-&gt;2)-alpha-D-Man-(1-&gt;2)-alpha-D-Man-(1-&gt;3)-[alpha-D-Man-(1-&gt;2)-alpha-D-Man-(1-&gt;3)-[alpha-D-Man-(1-&gt;2)-alpha-D-Man-(1-&gt;6)]-alpha-D-Man-(1-&gt;6)]-beta-D-Man-(1-&gt;4)-beta-D-GlcNAc-(1-&gt;4)-alpha-D-GlcNAc-diphospho-di-trans,poly-cis-dolichol + a di-trans,poly-cis-dolichyl phosphate + H(+). Its pathway is protein modification; protein glycosylation. In terms of biological role, adds the first glucose residue to the lipid-linked oligosaccharide precursor for N-linked glycosylation. Transfers glucose from dolichyl phosphate glucose (Dol-P-Glc) onto the lipid-linked oligosaccharide Man(9)GlcNAc(2)-PP-Dol. The polypeptide is Probable dolichyl pyrophosphate Man9GlcNAc2 alpha-1,3-glucosyltransferase (Arabidopsis thaliana (Mouse-ear cress)).